The primary structure comprises 141 residues: Acetyltransferase YpeA (141 aa).

An N-acetyltransferase domain is found at 1–141 (MEIRVFRQED…GKRLIEDEEY (141 aa)).

It belongs to the acetyltransferase family. YpeA subfamily.

In Salmonella choleraesuis (strain SC-B67), this protein is Acetyltransferase YpeA.